Here is a 524-residue protein sequence, read N- to C-terminus: Cytochrome c nitrite reductase subunit NrfA (524 aa).

The first 24 residues, methionine 1–threonine 24, serve as a signal peptide directing secretion. The tract at residues aspartate 29–tyrosine 39 is interaction with NrfH. 3 residues coordinate Ca(2+): glycine 78, glutamate 117, and alanine 118. Histidine 121, cysteine 147, cysteine 150, lysine 151, cysteine 187, cysteine 190, and histidine 191 together coordinate heme. Residues arginine 221–asparagine 222 are interaction with NrfH. Residues cysteine 229, cysteine 232, and histidine 233 each coordinate heme. Residues glutamate 235, tyrosine 236, lysine 295, and glutamine 297 each contribute to the Ca(2+) site. The heme site is built by histidine 309, cysteine 316, cysteine 319, histidine 320, histidine 335, cysteine 349, cysteine 352, histidine 353, and histidine 434. An interaction with NrfH region spans residues aspartate 318–lysine 331. The tract at residues glutamine 351 to aspartate 355 is interaction with NrfH.

This sequence belongs to the cytochrome c-552 family. Component of the NrfHA cytochrome c nitrite reductase complex composed of 4 NrfA catalytic subunits and 2 NrfH quinone-binding subunits. NrfA homodimer interacts with NrfH. Ca(2+) is required as a cofactor. It depends on heme as a cofactor.

It localises to the cell inner membrane. The enzyme catalyses 6 Fe(III)-[cytochrome c] + NH4(+) + 2 H2O = 6 Fe(II)-[cytochrome c] + nitrite + 8 H(+). Its function is as follows. Catalytic subunit of the cytochrome c nitrite reductase holocomplex NrfHA. Has both nitrite and sulfite reductase activities. Catalyzes the reduction of nitrite to ammonia, consuming six electrons acquired by the electron donor subunit NrfH from the menaquinone pool, in an anaerobic respiratory process of nitrite. The other biological function of the NrfHA holocomplex is to detoxify nitrite. This function is essential for the survival of this organism as it enables it to overcome inhibition by nitrite, which is produced by other organisms living in the same environment. This is Cytochrome c nitrite reductase subunit NrfA from Nitratidesulfovibrio vulgaris (strain ATCC 29579 / DSM 644 / CCUG 34227 / NCIMB 8303 / VKM B-1760 / Hildenborough) (Desulfovibrio vulgaris).